Here is a 653-residue protein sequence, read N- to C-terminus: Fructose-1,6-bisphosphatase class 3 (653 aa).

Belongs to the FBPase class 3 family. Requires Mn(2+) as cofactor.

The enzyme catalyses beta-D-fructose 1,6-bisphosphate + H2O = beta-D-fructose 6-phosphate + phosphate. It functions in the pathway carbohydrate biosynthesis; gluconeogenesis. The chain is Fructose-1,6-bisphosphatase class 3 from Listeria monocytogenes serovar 1/2a (strain ATCC BAA-679 / EGD-e).